Reading from the N-terminus, the 176-residue chain is Adipose-secreted signaling protein (176 aa).

The disordered stretch occupies residues 1-30; the sequence is MATAGKGSKGKGTGVRFTPEGTQGHPQEGT. A compositionally biased stretch (polar residues) spans 20-30; that stretch reads EGTQGHPQEGT.

The protein belongs to the ADISSP family.

Its function is as follows. May be involved in thermogenesis and glucose homeostasis. In Taeniopygia guttata (Zebra finch), this protein is Adipose-secreted signaling protein.